The chain runs to 409 residues: Elongation factor Tu (409 aa).

The region spanning 10 to 214 (KPHVNIGTIG…EVDGYIPQPE (205 aa)) is the tr-type G domain. The interval 19–26 (GHVDHGKT) is G1. A GTP-binding site is contributed by 19-26 (GHVDHGKT). Thr-26 provides a ligand contact to Mg(2+). Residues 60-64 (GITIN) are G2. The tract at residues 81–84 (DCPG) is G3. Residues 81–85 (DCPGH) and 136–139 (NKQD) each bind GTP. Residues 136–139 (NKQD) are G4. A G5 region spans residues 174 to 176 (SAL).

This sequence belongs to the TRAFAC class translation factor GTPase superfamily. Classic translation factor GTPase family. EF-Tu/EF-1A subfamily. As to quaternary structure, monomer.

It localises to the cytoplasm. The catalysed reaction is GTP + H2O = GDP + phosphate + H(+). GTP hydrolase that promotes the GTP-dependent binding of aminoacyl-tRNA to the A-site of ribosomes during protein biosynthesis. This Trichodesmium erythraeum (strain IMS101) protein is Elongation factor Tu.